The sequence spans 215 residues: MOB kinase activator-like 1A (215 aa).

Positions 1-27 (MSLFGLGRNQKTFRPKKSAPSGSKGAQ) are disordered. Positions 79, 84, 161, and 166 each coordinate Zn(2+).

The protein belongs to the MOB1/phocein family. As to quaternary structure, interacts with SIK1 at the plasma membrane and in the nucleus. Constitutively expressed. In 3- to 4-day-old seedlings, expression is high in the shoot apical meristem and along the vasculature in cotyledons, hypocotyls and roots. At the root tip, expression is detected in columella and lateral root cap cells as well as in the stem cell niche around the quiescent center (QC). The levels of expression decrease progressively in the meristematic zone from the root tip towards the base of the root, becoming stronger again in the elongation zone. In flowers, expression appears localized in ovules and pollen.

The protein resides in the nucleus. The protein localises to the cell membrane. It is found in the vacuole membrane. In terms of biological role, plays a key role in regulation of cell expansion and cell division. Required for proper plant development, the correct patterning of the root meristem and the control of root growth. Involved in both sporogenesis and gametogenesis. This is MOB kinase activator-like 1A from Arabidopsis thaliana (Mouse-ear cress).